Consider the following 616-residue polypeptide: Dihydroxy-acid dehydratase (616 aa).

Residue D81 participates in Mg(2+) binding. Position 122 (C122) interacts with [2Fe-2S] cluster. Positions 123 and 124 each coordinate Mg(2+). Residue K124 is modified to N6-carboxylysine. C195 provides a ligand contact to [2Fe-2S] cluster. E491 contacts Mg(2+). Residue S517 is the Proton acceptor of the active site.

The protein belongs to the IlvD/Edd family. In terms of assembly, homodimer. It depends on [2Fe-2S] cluster as a cofactor. Requires Mg(2+) as cofactor.

The catalysed reaction is (2R)-2,3-dihydroxy-3-methylbutanoate = 3-methyl-2-oxobutanoate + H2O. It catalyses the reaction (2R,3R)-2,3-dihydroxy-3-methylpentanoate = (S)-3-methyl-2-oxopentanoate + H2O. It participates in amino-acid biosynthesis; L-isoleucine biosynthesis; L-isoleucine from 2-oxobutanoate: step 3/4. The protein operates within amino-acid biosynthesis; L-valine biosynthesis; L-valine from pyruvate: step 3/4. Functions in the biosynthesis of branched-chain amino acids. Catalyzes the dehydration of (2R,3R)-2,3-dihydroxy-3-methylpentanoate (2,3-dihydroxy-3-methylvalerate) into 2-oxo-3-methylpentanoate (2-oxo-3-methylvalerate) and of (2R)-2,3-dihydroxy-3-methylbutanoate (2,3-dihydroxyisovalerate) into 2-oxo-3-methylbutanoate (2-oxoisovalerate), the penultimate precursor to L-isoleucine and L-valine, respectively. The chain is Dihydroxy-acid dehydratase from Shewanella woodyi (strain ATCC 51908 / MS32).